We begin with the raw amino-acid sequence, 302 residues long: tRNA pseudouridine synthase B (302 aa).

Asp-38 acts as the Nucleophile in catalysis.

It belongs to the pseudouridine synthase TruB family. Type 1 subfamily.

The enzyme catalyses uridine(55) in tRNA = pseudouridine(55) in tRNA. Responsible for synthesis of pseudouridine from uracil-55 in the psi GC loop of transfer RNAs. The sequence is that of tRNA pseudouridine synthase B from Ligilactobacillus salivarius (strain UCC118) (Lactobacillus salivarius).